We begin with the raw amino-acid sequence, 197 residues long: Large ribosomal subunit protein bL9 (197 aa).

The tract at residues 178-197 (GEFFDPEAQEDEAAAGETAQ) is disordered. Residues 181 to 191 (FDPEAQEDEAA) are compositionally biased toward acidic residues.

It belongs to the bacterial ribosomal protein bL9 family.

In terms of biological role, binds to the 23S rRNA. In Bradyrhizobium sp. (strain BTAi1 / ATCC BAA-1182), this protein is Large ribosomal subunit protein bL9.